Reading from the N-terminus, the 159-residue chain is 2-C-methyl-D-erythritol 2,4-cyclodiphosphate synthase (159 aa).

Residues D10 and H12 each coordinate a divalent metal cation. Residues 10-12 (DVH) and 36-37 (HS) each bind 4-CDP-2-C-methyl-D-erythritol 2-phosphate. Residue H44 participates in a divalent metal cation binding. 4-CDP-2-C-methyl-D-erythritol 2-phosphate-binding positions include 58–60 (DIG), 134–137 (TTTE), F141, and R144.

The protein belongs to the IspF family. In terms of assembly, homotrimer. A divalent metal cation serves as cofactor.

It carries out the reaction 4-CDP-2-C-methyl-D-erythritol 2-phosphate = 2-C-methyl-D-erythritol 2,4-cyclic diphosphate + CMP. The protein operates within isoprenoid biosynthesis; isopentenyl diphosphate biosynthesis via DXP pathway; isopentenyl diphosphate from 1-deoxy-D-xylulose 5-phosphate: step 4/6. In terms of biological role, involved in the biosynthesis of isopentenyl diphosphate (IPP) and dimethylallyl diphosphate (DMAPP), two major building blocks of isoprenoid compounds. Catalyzes the conversion of 4-diphosphocytidyl-2-C-methyl-D-erythritol 2-phosphate (CDP-ME2P) to 2-C-methyl-D-erythritol 2,4-cyclodiphosphate (ME-CPP) with a corresponding release of cytidine 5-monophosphate (CMP). The chain is 2-C-methyl-D-erythritol 2,4-cyclodiphosphate synthase from Bacteroides fragilis (strain YCH46).